We begin with the raw amino-acid sequence, 475 residues long: UDP-N-acetylmuramate--L-alanine ligase (475 aa).

ATP is bound at residue 114 to 120; sequence GTHGKTT.

This sequence belongs to the MurCDEF family.

Its subcellular location is the cytoplasm. It carries out the reaction UDP-N-acetyl-alpha-D-muramate + L-alanine + ATP = UDP-N-acetyl-alpha-D-muramoyl-L-alanine + ADP + phosphate + H(+). The protein operates within cell wall biogenesis; peptidoglycan biosynthesis. Functionally, cell wall formation. The protein is UDP-N-acetylmuramate--L-alanine ligase of Bartonella quintana (strain Toulouse) (Rochalimaea quintana).